Consider the following 596-residue polypeptide: Putative terpenoid synthase 5 (596 aa).

4 residues coordinate Mg(2+): aspartate 349, aspartate 353, asparagine 481, and aspartate 489. A DDXXD motif motif is present at residues aspartate 349 to aspartate 353.

This sequence belongs to the terpene synthase family. Tpsa subfamily. It depends on Mg(2+) as a cofactor. Requires Mn(2+) as cofactor.

The protein localises to the cytoplasm. Its pathway is secondary metabolite biosynthesis; terpenoid biosynthesis. This chain is Putative terpenoid synthase 5 (TPS05), found in Arabidopsis thaliana (Mouse-ear cress).